A 401-amino-acid chain; its full sequence is Methionine import ATP-binding protein MetN (401 aa).

Residues 6 to 248 (ITFDHVVKEF…PQQPVTKRFI (243 aa)) form the ABC transporter domain. 45–52 (GYSGAGKS) provides a ligand contact to ATP.

Belongs to the ABC transporter superfamily. Methionine importer (TC 3.A.1.24) family. In terms of assembly, the complex is composed of two ATP-binding proteins (MetN), two transmembrane proteins (MetI) and a solute-binding protein (MetQ).

It localises to the cell membrane. The catalysed reaction is L-methionine(out) + ATP + H2O = L-methionine(in) + ADP + phosphate + H(+). It catalyses the reaction D-methionine(out) + ATP + H2O = D-methionine(in) + ADP + phosphate + H(+). Functionally, part of the ABC transporter complex MetNIQ involved in methionine import. Responsible for energy coupling to the transport system. The chain is Methionine import ATP-binding protein MetN from Bifidobacterium longum (strain NCC 2705).